We begin with the raw amino-acid sequence, 675 residues long: Vitamin K-dependent protein S (675 aa).

A signal peptide spans 1-24 (MRVLSVRFRVLLACLALVLPNSET). A propeptide spanning residues 25–41 (NFLSKERASQVLVRKRR) is cleaved from the precursor. One can recognise a Gla domain in the interval 42-87 (ANTLLEETKKGNLERECIEELCNKEEAREVFENNPETDYFYPKYLG). 4-carboxyglutamate occurs at positions 47, 48, 55, 57, 60, 61, 66, 67, 70, 73, and 77. Cysteines 58 and 63 form a disulfide. Residues 88-116 (CLGAFRVGAFSAARQSANAYPDLRSCVNA) are thrombin-sensitive. One can recognise an EGF-like 1 domain in the interval 117–155 (IPDQCDPMPCNEDGYLSCKDGQGAFTCICKPGWQGDKCQ). Cystine bridges form between Cys121/Cys134, Cys126/Cys143, Cys145/Cys154, Cys161/Cys175, Cys171/Cys184, Cys186/Cys199, Cys205/Cys217, Cys212/Cys226, Cys228/Cys241, Cys247/Cys256, Cys252/Cys265, Cys267/Cys282, and Cys449/Cys475. (3R)-3-hydroxyaspartate is present on Asp136. Residues 157–200 (DINECKDPSNINGGCSQTCDNTPGSYHCSCKIGFAMLTNKKDCK) form the EGF-like 2; calcium-binding domain. The region spanning 201–242 (DVDECSLKPSVCGTAVCKNIPGDFECECPNGYRYDPSSKSCK) is the EGF-like 3; calcium-binding domain. The 41-residue stretch at 243 to 283 (DVDECSENTCAQLCVNYPGGYSCYCDGKKGFKLAQDQRSCE) folds into the EGF-like 4; calcium-binding domain. 2 consecutive Laminin G-like domains span residues 299 to 475 (LLYL…NKHC) and 484 to 665 (YYPG…AHSC). Residues Asn499 and Asn509 are each glycosylated (N-linked (GlcNAc...) asparagine).

The iron and 2-oxoglutarate dependent 3-hydroxylation of aspartate and asparagine is (R) stereospecific within EGF domains. Plasma.

It localises to the secreted. Functionally, anticoagulant plasma protein; it is a cofactor to activated protein C in the degradation of coagulation factors Va and VIIIa. It helps to prevent coagulation and stimulating fibrinolysis. The protein is Vitamin K-dependent protein S (Pros1) of Rattus norvegicus (Rat).